We begin with the raw amino-acid sequence, 143 residues long: Large ribosomal subunit protein uL16 (143 aa).

Residues Met-1–Arg-26 are disordered. Positions Arg-8–Arg-20 are enriched in basic residues.

The protein belongs to the universal ribosomal protein uL16 family. In terms of assembly, part of the 50S ribosomal subunit.

Functionally, binds 23S rRNA and is also seen to make contacts with the A and possibly P site tRNAs. In Methylacidiphilum infernorum (isolate V4) (Methylokorus infernorum (strain V4)), this protein is Large ribosomal subunit protein uL16.